We begin with the raw amino-acid sequence, 181 residues long: Ubiquitin-like protein 4B (181 aa).

Residues 1–76 enclose the Ubiquitin-like domain; the sequence is MWLTVKLLLG…LNVIIRPLEK (76 aa). The segment at 139–181 is disordered; that stretch reads PEGKHSGATGSTRESKGDMEPRRNMKCNLAHKDGFKREKSPGK. Basic and acidic residues-rich tracts occupy residues 151 to 161 and 168 to 181; these read RESKGDMEPRR and AHKDGFKREKSPGK.

The protein resides in the cytoplasm. The polypeptide is Ubiquitin-like protein 4B (UBL4B) (Monodelphis domestica (Gray short-tailed opossum)).